A 180-amino-acid chain; its full sequence is MSRVGKMPVKIPEKVKVSVDGNVVKVEGPKGKMHFPTNPLVSVQVDKGEVKVARQDESHVAKGLHGLTRTLVKNALEGVVKGYEKGLEINGVGFKAEVKGKEIHFTLGFSHPVVFKLPEGVTAEVDAKQTKLTIRSVDKHLLGLTAAKVRDLRPPEPYKGKGIKYADETIRRKEGKTGAA.

Belongs to the universal ribosomal protein uL6 family. In terms of assembly, part of the 50S ribosomal subunit.

In terms of biological role, this protein binds to the 23S rRNA, and is important in its secondary structure. It is located near the subunit interface in the base of the L7/L12 stalk, and near the tRNA binding site of the peptidyltransferase center. The sequence is that of Large ribosomal subunit protein uL6 from Anaeromyxobacter dehalogenans (strain 2CP-C).